The sequence spans 385 residues: tRNA-specific 2-thiouridylase MnmA (385 aa).

Residues 18-25 (AMSGGVDS) and Leu44 each bind ATP. The active-site Nucleophile is the Cys112. Cysteines 112 and 209 form a disulfide. Gly136 contributes to the ATP binding site. Residues 159-161 (RDQ) form an interaction with tRNA region. Cys209 (cysteine persulfide intermediate) is an active-site residue.

The protein belongs to the MnmA/TRMU family.

Its subcellular location is the cytoplasm. The catalysed reaction is S-sulfanyl-L-cysteinyl-[protein] + uridine(34) in tRNA + AH2 + ATP = 2-thiouridine(34) in tRNA + L-cysteinyl-[protein] + A + AMP + diphosphate + H(+). Catalyzes the 2-thiolation of uridine at the wobble position (U34) of tRNA, leading to the formation of s(2)U34. In Methylorubrum extorquens (strain PA1) (Methylobacterium extorquens), this protein is tRNA-specific 2-thiouridylase MnmA.